The chain runs to 382 residues: D-alanine--D-alanine ligase (382 aa).

An ATP-grasp domain is found at 139–348 (KRLMRDAGLP…PPALMDALIA (210 aa)). Residue 168–223 (EALESRTLFVKPANMGSSVGVSRVADAGQFDQALAHAFAYDEKILIERAVPRAREI) participates in ATP binding. D300, E315, and N317 together coordinate Mg(2+).

Belongs to the D-alanine--D-alanine ligase family. It depends on Mg(2+) as a cofactor. The cofactor is Mn(2+).

Its subcellular location is the cytoplasm. The catalysed reaction is 2 D-alanine + ATP = D-alanyl-D-alanine + ADP + phosphate + H(+). It participates in cell wall biogenesis; peptidoglycan biosynthesis. Functionally, cell wall formation. The sequence is that of D-alanine--D-alanine ligase from Methylobacterium sp. (strain 4-46).